The chain runs to 236 residues: Lipid A 4'-phosphatase (236 aa).

The next 5 helical transmembrane spans lie at 26–46 (FFYL…FLFF), 58–78 (FIVG…SSFF), 134–153 (YTWT…IYIG), 160–182 (IIPG…LYAR), and 200–220 (GDSI…MLCM).

It belongs to the lipid A LpxF 4'-phosphatase family.

It localises to the cell inner membrane. It functions in the pathway bacterial outer membrane biogenesis; LPS lipid A biosynthesis. Removes the 4'-phosphate group from lipid A species. Absence of phosphate groups in lipid A renders the bacteria resistant to host-derived cationic antimicrobial peptides (CAMP) and allows it to camouflage itself from the host innate immune response. Removal of the 4'-phosphate may be required to generate the substrate for deacylation of the pentaacyl lipid A to the tetraccylated lipid A species. In Porphyromonas gingivalis (strain ATCC 33277 / DSM 20709 / CIP 103683 / JCM 12257 / NCTC 11834 / 2561), this protein is Lipid A 4'-phosphatase.